The following is a 567-amino-acid chain: Urease subunit alpha (567 aa).

In terms of domain architecture, Urease spans 129-567 (GGIDTHIHFI…LPMAQRYFLF (439 aa)). Residues histidine 134, histidine 136, and lysine 217 each contribute to the Ni(2+) site. Lysine 217 is modified (N6-carboxylysine). Histidine 219 serves as a coordination point for substrate. Positions 246 and 272 each coordinate Ni(2+). Histidine 320 serves as the catalytic Proton donor. Ni(2+) is bound at residue aspartate 360.

The protein belongs to the metallo-dependent hydrolases superfamily. Urease alpha subunit family. Probable heterotrimer of UreA (gamma), UreB (beta) and UreC (alpha) subunits. Three heterotrimers associate to form the active enzyme. The trimeric urease interacts with an accessory complex composed of UreD, UreF and UreG, which is required for the assembly of the nickel containing metallocenter of UreC. The UreE protein may also play a direct role in nickel transfer to the urease apoprotein. Ni cation is required as a cofactor. Carboxylation allows a single lysine to coordinate two nickel ions.

The protein localises to the cytoplasm. It carries out the reaction urea + 2 H2O + H(+) = hydrogencarbonate + 2 NH4(+). It functions in the pathway nitrogen metabolism; urea degradation; CO(2) and NH(3) from urea (urease route): step 1/1. The protein is Urease subunit alpha of Proteus mirabilis (strain HI4320).